Here is a 491-residue protein sequence, read N- to C-terminus: Delayed-rectifier potassium channel regulatory subunit KCNS3 (491 aa).

Topologically, residues 1-182 (MVFGEFFHRP…IRMENPAYCL (182 aa)) are cytoplasmic. Residues 183 to 204 (SAKLIAISSLSVVLASIVAMCV) traverse the membrane as a helical segment. At 205–220 (HSMSEFQNEDGEVDDP) the chain is on the extracellular side. The helical transmembrane segment at 221–243 (VLEGVEIACIAWFTGELAVRLAA) threads the bilayer. The Cytoplasmic segment spans residues 244-254 (APCQKKFWKNP). Residues 255–275 (LNIIDFVSIIPFYATLAVDTK) traverse the membrane as a helical segment. Over 276–285 (EEESEDIENM) the chain is Extracellular. The helical; Voltage-sensor transmembrane segment at 286–306 (GKVVQILRLMRIFRILKLARH) threads the bilayer. Over 307–321 (SVGLRSLGATLRHSY) the chain is Cytoplasmic. The helical transmembrane segment at 322–343 (HEVGLLLLFLSVGISIFSVLIY) threads the bilayer. Over 344–357 (SVEKDDHTSSLTSI) the chain is Extracellular. Positions 358–369 (PICWWWATISMT) form an intramembrane region, helical. The short motif at 370-375 (TVGYGD) is the Selectivity filter element. Residues 370 to 377 (TVGYGDTH) lie within the membrane without spanning it. Residues 378-384 (PVTLAGK) are Extracellular-facing. A helical membrane pass occupies residues 385 to 413 (LIASTCIICGILVVALPITIIFNKFSKYY). Topologically, residues 414 to 491 (QKQKDIDVDQ…TTSLENCTAK (78 aa)) are cytoplasmic.

This sequence belongs to the potassium channel family. S (TC 1.A.1.2) subfamily. Kv9.3/KCNS3 sub-subfamily. In terms of assembly, heterotetramer with KCNB1. Does not form homomultimers. Detected in whole normal term placental and placental chorionic plate arteries and veins. Detected in syncytiotrophoblast and in blood vessel endothelium within intermediate villi and chorionic plate (at protein level). Detected in most tissues, but not in peripheral blood lymphocytes. The highest levels of expression are in lung.

It localises to the cell membrane. In terms of biological role, potassium channel regulatory subunit that modulates the delayed rectifier potassium channel activity of KCNB1 by namely slowing down the deactivation and inactivation time constants. While it does not form functional channel on its own, it can form functional heterotetrameric channels with KCNB1. This is Delayed-rectifier potassium channel regulatory subunit KCNS3 from Homo sapiens (Human).